Reading from the N-terminus, the 89-residue chain is Large ribosomal subunit protein bL27 (89 aa).

Residues 1–26 (MAHKKAGGSSKNGRDSNAQRRGVKRF) form a disordered region.

It belongs to the bacterial ribosomal protein bL27 family.

The polypeptide is Large ribosomal subunit protein bL27 (Maridesulfovibrio salexigens (strain ATCC 14822 / DSM 2638 / NCIMB 8403 / VKM B-1763) (Desulfovibrio salexigens)).